Here is a 225-residue protein sequence, read N- to C-terminus: Protein-L-isoaspartate O-methyltransferase (225 aa).

Residue S75 is part of the active site.

It belongs to the methyltransferase superfamily. L-isoaspartyl/D-aspartyl protein methyltransferase family.

The protein resides in the cytoplasm. It catalyses the reaction [protein]-L-isoaspartate + S-adenosyl-L-methionine = [protein]-L-isoaspartate alpha-methyl ester + S-adenosyl-L-homocysteine. Catalyzes the methyl esterification of L-isoaspartyl residues in peptides and proteins that result from spontaneous decomposition of normal L-aspartyl and L-asparaginyl residues. It plays a role in the repair and/or degradation of damaged proteins. This chain is Protein-L-isoaspartate O-methyltransferase, found in Stenotrophomonas maltophilia (strain K279a).